Consider the following 983-residue polypeptide: MRIFSFLFLLLLGILTGQGLVSGTDNGKTTDVTWDKYSLSVKGQRLFVFSGEFHYQRLPVPELWLDVFQKLRANGFNAISVYFFWSFHSASEGEFDFENGAHDIQRLFDYAKEAGLYVIARAGPYCNAETSAGGFALWAANGQMGNERTSDEAYYEKWRPWILEVGKIIAKNQITNGGPVILNQHENELVETTYDPNHTLVVYMKQIAQVFEEAGIVVPSSHNEKGMRGVSWSTDYHNVGGAVNIYGLDSYPGGLSCTNPNSGFNLVRTYHQWFQNYSFTQPSYLPEFEGGWFQPWGGSFYDTCATELSPEFPDVYYKNNIGSRVTLHSIYMTYGGTNWGHSAAPVVYTSYDYAAPLRETREIRDKLKQTKLIGLFTRVSKDLLKTYMEGNGTGYTSDSSIYTWSLRNPDTNAGFYVLAHSTSSTRDVTTFTLNVTTSAGAISIPDIELNGRQSKIIVTDYNFGTNSTLLFSSAEVLTYANLDVNVLVFYLNVGQKGTFVFKDEPKLAFQTYGNSNLTTSESSYGTQYSYTQGKGVTAVKFSNGVLAYFLDKESAWNFFAPPTTSSPQVAPNEHILVQGPYLVRGASVNHGTVEITGDNANTTSIEVYTGNSQVKKIKWNGKTIETRKTAYGSLIGTAPGAEDVKIQLPSLDSWKAQDTLPEIQPDYDDSKWTVCNKTTSVNAIAPLSLPVLYSGDYGYHAGTKVYRGRFDGRNVTGANVTVQNGAAAGWAAWVNGQYAGGSAGSPNLAATSAVLTFNSSSLKDQDNVLTVVTDYTGHDQNSVRPKGTQNPRGILGATLIGGGNFTSWRIQGNAGGEKNIDPVRGPMNEGGLYGERMGWHLPGYKVPKSASKSSPLDGVSGAEGRFYTTTFKLKLDKDLDVPIGLQLGAPEGTKAVVQVFMNGYQFGHYLPHTGPQSLFPFPPGVINNRGENTLAISMWALTDAGAKLDKVELVAYGKYRSGFDFNQDWGYLQPGWKDRSQYA.

The first 23 residues, 1–23 (MRIFSFLFLLLLGILTGQGLVSG), serve as a signal peptide directing secretion. 5 residues coordinate substrate: tyrosine 82, asparagine 127, alanine 128, glutamate 129, and asparagine 187. Glutamate 188 serves as the catalytic Proton donor. An N-linked (GlcNAc...) asparagine glycan is attached at asparagine 197. A substrate-binding site is contributed by tyrosine 251. A disulfide bridge links cysteine 257 with cysteine 304. Asparagine 276 is a glycosylation site (N-linked (GlcNAc...) asparagine). Glutamate 287 serves as the catalytic Nucleophile. Tyrosine 353 lines the substrate pocket. 10 N-linked (GlcNAc...) asparagine glycosylation sites follow: asparagine 391, asparagine 434, asparagine 466, asparagine 516, asparagine 601, asparagine 676, asparagine 714, asparagine 719, asparagine 758, and asparagine 804.

The protein belongs to the glycosyl hydrolase 35 family.

The protein resides in the secreted. The catalysed reaction is Hydrolysis of terminal non-reducing beta-D-galactose residues in beta-D-galactosides.. Cleaves beta-linked terminal galactosyl residues from gangliosides, glycoproteins, and glycosaminoglycans. This Aspergillus fumigatus (strain CBS 144.89 / FGSC A1163 / CEA10) (Neosartorya fumigata) protein is Probable beta-galactosidase C (lacC).